The sequence spans 171 residues: Apoptosis regulator Bcl-2 homolog (171 aa).

In terms of assembly, interacts with host BECN1; this interaction inhibits host autophagy. Interacts with host BAK1 and BAX.

It localises to the host cytoplasm. Functionally, plays a role in the protection against apoptosis mediated by cytotoxic cells during the immune response to acute and persistent viral infection. Contributes therefore to latency establishment. Plays also a role in the inhibition of host starvation-induced autophagy which ultimately contributes to the viral chronic infection. This Murid herpesvirus 4 (MuHV-4) protein is Apoptosis regulator Bcl-2 homolog (vBCL2).